The chain runs to 184 residues: Ribosome-recycling factor (184 aa).

Belongs to the RRF family.

Its subcellular location is the cytoplasm. Its function is as follows. Responsible for the release of ribosomes from messenger RNA at the termination of protein biosynthesis. May increase the efficiency of translation by recycling ribosomes from one round of translation to another. The chain is Ribosome-recycling factor from Hyphomonas neptunium (strain ATCC 15444).